We begin with the raw amino-acid sequence, 83 residues long: Small ribosomal subunit protein uS17 (83 aa).

It belongs to the universal ribosomal protein uS17 family. Part of the 30S ribosomal subunit.

Functionally, one of the primary rRNA binding proteins, it binds specifically to the 5'-end of 16S ribosomal RNA. This Campylobacter concisus (strain 13826) protein is Small ribosomal subunit protein uS17.